The sequence spans 741 residues: Chromosome transmission fidelity protein 18 (741 aa).

183–190 is an ATP binding site; sequence GPPGIGKT.

It belongs to the activator 1 small subunits family. CTF18 subfamily. In terms of assembly, component of the CTF18-RFC complex, which consists of CTF18, CTF8, DCC1, RFC2, RFC3, RFC4 and RFC5. CTF18 interacts with ECO1.

It is found in the nucleus. Its function is as follows. Essential for the fidelity of chromosome transmission. Required for the DNA replication block checkpoint. Component of the RFC-like complex CTF18-RFC which is required for efficient establishment of chromosome cohesion during S-phase and may load or unload POL30/PCNA. During a clamp loading circle, the RFC:clamp complex binds to DNA and the recognition of the double-stranded/single-stranded junction stimulates ATP hydrolysis by RFC. The complex presumably provides bipartite ATP sites in which one subunit supplies a catalytic site for hydrolysis of ATP bound to the neighboring subunit. Dissociation of RFC from the clamp leaves the clamp encircling DNA. This Saccharomyces cerevisiae (strain ATCC 204508 / S288c) (Baker's yeast) protein is Chromosome transmission fidelity protein 18 (CTF18).